The primary structure comprises 228 residues: Protein TIFY 10a (228 aa).

The 36-residue stretch at 75–110 folds into the Tify domain; sequence REQEKRQLTIFYGGKVLVFDDFPAEKAKDLMQMASK. The Jas motif lies at 164 to 189; sequence PQARKASLHRFLEKRKDRLQAKAPYQ. The short motif at 166–173 is the Nuclear localization signal element; the sequence is ARKASLHR. The segment at 175-228 is disordered; sequence LEKRKDRLQAKAPYQGSPSDASPVKKELQESQPWLGLGPQVAAPDLSLRQESSQ.

The protein belongs to the TIFY/JAZ family. In terms of assembly, interacts with COI1A and COI1B in a coronatine-dependent manner. Coronatine is an analog of jasmonoyl isoleucine (JA-Ile). Post-translationally, ubiquitinated. Targeted for degradation by the SCF(COI1) E3 ubiquitin ligase-proteasome pathway during jasmonate signaling.

The protein localises to the nucleus. In terms of biological role, repressor of jasmonate responses. The polypeptide is Protein TIFY 10a (Oryza sativa subsp. japonica (Rice)).